The following is a 469-amino-acid chain: RNA-editing ligase 1, mitochondrial (469 aa).

Residues 1 to 44 (MQLQRLGAPLLKRLVGGCIRQSTAPIMPCVVVSGSGVFLTPVRT) constitute a mitochondrion transit peptide. ATP is bound by residues 59-61 (IEI), 86-92 (EKVHGTN), Arg111, Glu159, Phe209, and 307-309 (KLR). Lys87 acts as the N6-AMP-lysine intermediate in catalysis. Positions 450-469 (AAAQSEAIPPLSPAAPTKGE) are disordered.

This sequence belongs to the RNA ligase 2 family. As to quaternary structure, component of the RNA editing complex (editosome), a 1600 kDa complex composed of at least 20 proteins. Interacts with terminal uridylyltransferase MEAT1.

The protein resides in the mitochondrion. It carries out the reaction ATP + (ribonucleotide)n-3'-hydroxyl + 5'-phospho-(ribonucleotide)m = (ribonucleotide)n+m + AMP + diphosphate.. In terms of biological role, essential for RNA editing. RNA editing in kinetoplastid mitochondria inserts and deletes uridylates at multiple sites in pre-mRNAs as directed by guide RNAs. The polypeptide is RNA-editing ligase 1, mitochondrial (REL1) (Trypanosoma brucei brucei).